We begin with the raw amino-acid sequence, 302 residues long: MTEISELASSSQKPEKTKYNLPKPLPAYYPHPGSPLYADKELYARIANAPKKLVGRHVCQPRTGLAVKIPQKSIFSIVVPEGPQVCDLNIWNFHNPRERFWAARTRQIHSAHVSTYDRLWSTLPYLRPLVTIIGDSLQARHDEWGGRVHDTLGTRCDPYIDKLISGKDNDLHCHSNLTRAIMPYGLTEFDVHDVLNVFQVTGLNEYDQYFMETCPATSKDYFQCFAEQDLLVAISACPGGDLSNWGWGEDATDVESSKMVDCCRPLAIEVYELEDEENSLKGWVPPQVVNYTGNHGLKAPSS.

The segment at methionine 1–proline 24 is disordered.

This is an uncharacterized protein from Schizosaccharomyces pombe (strain 972 / ATCC 24843) (Fission yeast).